The sequence spans 362 residues: 3-dehydroquinate synthase (362 aa).

NAD(+) is bound by residues 70-75 (DGESYK), 104-108 (GVVGD), 128-129 (TT), lysine 141, and lysine 150. Zn(2+) contacts are provided by glutamate 183, histidine 246, and histidine 263.

Belongs to the sugar phosphate cyclases superfamily. Dehydroquinate synthase family. It depends on Co(2+) as a cofactor. Zn(2+) is required as a cofactor. The cofactor is NAD(+).

The protein resides in the cytoplasm. The enzyme catalyses 7-phospho-2-dehydro-3-deoxy-D-arabino-heptonate = 3-dehydroquinate + phosphate. Its pathway is metabolic intermediate biosynthesis; chorismate biosynthesis; chorismate from D-erythrose 4-phosphate and phosphoenolpyruvate: step 2/7. Functionally, catalyzes the conversion of 3-deoxy-D-arabino-heptulosonate 7-phosphate (DAHP) to dehydroquinate (DHQ). The sequence is that of 3-dehydroquinate synthase from Saccharophagus degradans (strain 2-40 / ATCC 43961 / DSM 17024).